Here is a 286-residue protein sequence, read N- to C-terminus: 4-hydroxybenzoate octaprenyltransferase (286 aa).

A run of 8 helical transmembrane segments spans residues 20 to 40, 43 to 63, 96 to 116, 142 to 162, 167 to 187, 210 to 230, 235 to 255, and 266 to 286; these read IGTL…AGGM, LKVL…GCII, LFVI…GLVV, FLGV…TGEV, WWLF…YAMV, QIIG…GWSA, VYGL…MLIF, and FLNN…DYLF.

Belongs to the UbiA prenyltransferase family. Mg(2+) is required as a cofactor.

Its subcellular location is the cell inner membrane. The catalysed reaction is all-trans-octaprenyl diphosphate + 4-hydroxybenzoate = 4-hydroxy-3-(all-trans-octaprenyl)benzoate + diphosphate. It functions in the pathway cofactor biosynthesis; ubiquinone biosynthesis. In terms of biological role, catalyzes the prenylation of para-hydroxybenzoate (PHB) with an all-trans polyprenyl group. Mediates the second step in the final reaction sequence of ubiquinone-8 (UQ-8) biosynthesis, which is the condensation of the polyisoprenoid side chain with PHB, generating the first membrane-bound Q intermediate 3-octaprenyl-4-hydroxybenzoate. This chain is 4-hydroxybenzoate octaprenyltransferase, found in Shewanella oneidensis (strain ATCC 700550 / JCM 31522 / CIP 106686 / LMG 19005 / NCIMB 14063 / MR-1).